A 533-amino-acid polypeptide reads, in one-letter code: Probable ADP-ribosylation factor-binding protein C25H2.16c (533 aa).

Residues 15–151 (ATEPYAFEPD…LLSYKGYTFP (137 aa)) form the VHS domain. A GAT domain is found at 178–305 (REAMSAKLQE…LLTQYDHLLE (128 aa)). Residue Ser-320 is modified to Phosphoserine. A GAE domain is found at 417–532 (NNFTSTCAFE…EYTGQSSIRL (116 aa)).

It belongs to the GGA protein family.

The protein localises to the golgi apparatus. Its subcellular location is the trans-Golgi network. May play a role in the regulation of membrane traffic through the trans-Golgi network. In Schizosaccharomyces pombe (strain 972 / ATCC 24843) (Fission yeast), this protein is Probable ADP-ribosylation factor-binding protein C25H2.16c.